Reading from the N-terminus, the 513-residue chain is MAFSQYISLAPELLLATAIFCLVFWVLRGTRTQVPKGLKSPPGPWGLPFIGHMLTLGKNPHLSLTKLSQQYGDVLQIRIGSTPVVVLSGLNTIKQALVKQGDDFKGRPDLYSFTLITNGKSMTFNPDSGPVWAARRRLAQDALKSFSIASDPTSVSSCYLEEHVSKEANHLISKFQKLMAEVGHFEPVNQVVESVANVIGAMCFGKNFPRKSEEMLNLVKSSKDFVENVTSGNAVDFFPVLRYLPNPALKRFKNFNDNFVLFLQKTVQEHYQDFNKNSIQDITGALFKHSENYKDNGGLIPQEKIVNIVNDIFGAGFETVTTAIFWSILLLVTEPKVQRKIHEELDTVIGRDRQPRLSDRPQLPYLEAFILEIYRYTSFVPFTIPHSTTRDTSLNGFHIPKECCIFINQWQVNHDEKQWKDPFVFRPERFLTNDNTAIDKTLSEKVMLFGLGKRRCIGEIPAKWEVFLFLAILLHQLEFTVPPGVKVDLTPSYGLTMKPRTCEHVQAWPRFSK.

Residue serine 68 is glycosylated (O-linked (GlcNAc) serine). Cysteine 456 lines the heme pocket.

The protein belongs to the cytochrome P450 family. Interacts with PGRMC1; the interaction requires PGRMC1 homodimerization. Heme is required as a cofactor.

The protein resides in the endoplasmic reticulum membrane. Its subcellular location is the microsome membrane. The enzyme catalyses an organic molecule + reduced [NADPH--hemoprotein reductase] + O2 = an alcohol + oxidized [NADPH--hemoprotein reductase] + H2O + H(+). It carries out the reaction 17beta-estradiol + reduced [NADPH--hemoprotein reductase] + O2 = 2-hydroxy-17beta-estradiol + oxidized [NADPH--hemoprotein reductase] + H2O + H(+). It catalyses the reaction 17beta-estradiol + reduced [NADPH--hemoprotein reductase] + O2 = 4-hydroxy-17beta-estradiol + oxidized [NADPH--hemoprotein reductase] + H2O + H(+). The catalysed reaction is estrone + reduced [NADPH--hemoprotein reductase] + O2 = 2-hydroxyestrone + oxidized [NADPH--hemoprotein reductase] + H2O + H(+). The enzyme catalyses estrone + reduced [NADPH--hemoprotein reductase] + O2 = 4-hydroxyestrone + oxidized [NADPH--hemoprotein reductase] + H2O + H(+). It carries out the reaction cholesterol + reduced [NADPH--hemoprotein reductase] + O2 = 25-hydroxycholesterol + oxidized [NADPH--hemoprotein reductase] + H2O + H(+). It catalyses the reaction all-trans-retinol + reduced [NADPH--hemoprotein reductase] + O2 = all-trans-retinal + oxidized [NADPH--hemoprotein reductase] + 2 H2O + H(+). The catalysed reaction is all-trans-retinal + reduced [NADPH--hemoprotein reductase] + O2 = all-trans-retinoate + oxidized [NADPH--hemoprotein reductase] + H2O + 2 H(+). The enzyme catalyses (5Z,8Z,11Z,14Z)-eicosatetraenoate + reduced [NADPH--hemoprotein reductase] + O2 = (14R,15S)-epoxy-(5Z,8Z,11Z)-eicosatrienoate + oxidized [NADPH--hemoprotein reductase] + H2O + H(+). It carries out the reaction (5Z,8Z,11Z,14Z)-eicosatetraenoate + reduced [NADPH--hemoprotein reductase] + O2 = (14S,15R)-epoxy-(5Z,8Z,11Z)-eicosatrienoate + oxidized [NADPH--hemoprotein reductase] + H2O + H(+). It catalyses the reaction (5Z,8Z,11Z,14Z,17Z)-eicosapentaenoate + reduced [NADPH--hemoprotein reductase] + O2 = (17R,18S)-epoxy-(5Z,8Z,11Z,14Z)-eicosatetraenoate + oxidized [NADPH--hemoprotein reductase] + H2O + H(+). The catalysed reaction is (4Z,7Z,10Z,13Z,16Z,19Z)-docosahexaenoate + reduced [NADPH--hemoprotein reductase] + O2 = (19R,20S)-epoxy-(4Z,7Z,10Z,13Z,16Z)-docosapentaenoate + oxidized [NADPH--hemoprotein reductase] + H2O + H(+). The enzyme catalyses (5S)-hydroperoxy-(6E,8Z,11Z,14Z)-eicosatetraenoate = 5-oxo-(6E,8Z,11Z,14Z)-eicosatetraenoate + H2O. It carries out the reaction (12S)-hydroperoxy-(5Z,8Z,10E,14Z)-eicosatetraenoate = 12-oxo-(5Z,8Z,10E,14Z)-eicosatetraenoate + H2O. It catalyses the reaction (15S)-hydroperoxy-(5Z,8Z,11Z,13E)-eicosatetraenoate = 15-oxo-(5Z,8Z,11Z,13E)-eicosatetraenoate + H2O. The catalysed reaction is (13S)-hydroperoxy-(9Z,11E)-octadecadienoate = 13-oxo-(9Z,11E)-octadecadienoate + H2O. The enzyme catalyses (5Z,8Z,11Z,14Z)-eicosatetraenoate + reduced [NADPH--hemoprotein reductase] + O2 = 13-hydroxy-(5Z,8Z,11Z,14Z)-eicosatetraenoate + oxidized [NADPH--hemoprotein reductase] + H2O + H(+). It carries out the reaction (5Z,8Z,11Z,14Z)-eicosatetraenoate + reduced [NADPH--hemoprotein reductase] + O2 = 19-hydroxy-(5Z,8Z,11Z,14Z)-eicosatetraenoate + oxidized [NADPH--hemoprotein reductase] + H2O + H(+). It catalyses the reaction (9Z,12Z)-octadecadienoate + reduced [NADPH--hemoprotein reductase] + O2 = 11-hydroxy-(9Z,12Z)-octadecadienoate + oxidized [NADPH--hemoprotein reductase] + H2O + H(+). Its pathway is cofactor metabolism; retinol metabolism. It participates in steroid metabolism; cholesterol metabolism. The protein operates within lipid metabolism; arachidonate metabolism. In terms of biological role, a cytochrome P450 monooxygenase involved in the metabolism of various endogenous substrates, including fatty acids, steroid hormones and vitamins. Mechanistically, uses molecular oxygen inserting one oxygen atom into a substrate, and reducing the second into a water molecule, with two electrons provided by NADPH via cytochrome P450 reductase (NADPH--hemoprotein reductase). Catalyzes the hydroxylation of carbon-hydrogen bonds. Exhibits high catalytic activity for the formation of hydroxyestrogens from estrone (E1) and 17beta-estradiol (E2), namely 2-hydroxy E1 and E2. Metabolizes cholesterol toward 25-hydroxycholesterol, a physiological regulator of cellular cholesterol homeostasis. May act as a major enzyme for all-trans retinoic acid biosynthesis in the liver. Catalyzes two successive oxidative transformation of all-trans retinol to all-trans retinal and then to the active form all-trans retinoic acid. Primarily catalyzes stereoselective epoxidation of the last double bond of polyunsaturated fatty acids (PUFA), displaying a strong preference for the (R,S) stereoisomer. Catalyzes bisallylic hydroxylation and omega-1 hydroxylation of PUFA. May also participate in eicosanoids metabolism by converting hydroperoxide species into oxo metabolites (lipoxygenase-like reaction, NADPH-independent). Plays a role in the oxidative metabolism of xenobiotics. Catalyzes the N-hydroxylation of heterocyclic amines and the O-deethylation of phenacetin. Metabolizes caffeine via N3-demethylation. The polypeptide is Cytochrome P450 1A2 (Cyp1a2) (Rattus norvegicus (Rat)).